A 318-amino-acid chain; its full sequence is Olfactory receptor 5M5 (318 aa).

Over 1-31 (MLAPKKMVRGNYSMVTEFILLGLTDRPELQP) the chain is Extracellular. An N-linked (GlcNAc...) asparagine glycan is attached at Asn-11. Residues 32–52 (LLFVLFLVIYLITVGGNLGMM) traverse the membrane as a helical segment. The Cytoplasmic portion of the chain corresponds to 53 to 60 (VLIRIDSR). A helical membrane pass occupies residues 61–81 (LHTPMYYFLASLSCLDLCYST). Residues 82 to 105 (NVTPKMLVNFLSEKKTISYAACLV) lie on the Extracellular side of the membrane. Cys-103 and Cys-195 are joined by a disulfide. Residues 106–126 (QCYFFIAMVITEYYMLAVMAY) form a helical membrane-spanning segment. Topologically, residues 127-139 (DRYMAICNPLLYS) are cytoplasmic. Residues 140-160 (SKMSKGVCVRLIAGPYIYGFL) form a helical membrane-spanning segment. Residues 161-202 (SGLMETMWTYRLTFCGSNIINHFYCADPPLIRLSCSDTFIKE) are Extracellular-facing. The helical transmembrane segment at 203–223 (TSMFVVAGFNLSNSLFIILIS) threads the bilayer. Residues 224–243 (YLFILIAILRMRSAEGRRKA) are Cytoplasmic-facing. The chain crosses the membrane as a helical span at residues 244–264 (FSTCGSHLVAVTVFYGTLFCM). Topologically, residues 265 to 277 (YVRPPTDKSVEQS) are extracellular. Residues 278–298 (KIIAVFYTFVSPMLNPIIYSL) form a helical membrane-spanning segment. The Cytoplasmic segment spans residues 299–318 (RNKDVKHAFWKLVRRNVLSK).

The protein belongs to the G-protein coupled receptor 1 family.

Its subcellular location is the cell membrane. In terms of biological role, potential odorant receptor. In Mus musculus (Mouse), this protein is Olfactory receptor 5M5.